The chain runs to 451 residues: 12S seed storage protein CRD (451 aa).

An N-terminal signal peptide occupies residues 1-25 (MHKLLFSLLSVVSLSFLLFFHGAEA). Intrachain disulfides connect C36–C69 and C112–C277. S39 is modified (phosphoserine). Cupin type-1 domains follow at residues 42 to 234 (NSLA…ETAK) and 283 to 432 (ENID…EEAK). T115 carries the post-translational modification Phosphothreonine. Phosphoserine is present on S302. At T396 the chain carries Phosphothreonine. At S437 the chain carries Phosphoserine.

The protein belongs to the 11S seed storage protein (globulins) family. In terms of assembly, hexamer; each subunit is composed of an acidic and a basic chain derived from a single precursor and linked by a disulfide bond. In terms of processing, ubiquitinated. Post-translationally, proteolytically processed during seed maturation at a conserved Asn-Gly peptide bond by an asparaginyl endopeptidase to produce two mature polypeptides referred to as alpha and beta subunits that are joined together by a disulfide bond. Phosphorylated in seeds on some Tyr residues in response to abscisic acid (ABA). Accumulates in seeds 8 days after anthesis.

Its subcellular location is the protein storage vacuole. Its function is as follows. Seed storage protein. This is 12S seed storage protein CRD (CRD) from Arabidopsis thaliana (Mouse-ear cress).